The sequence spans 455 residues: Trigger factor (455 aa).

Positions 169–262 (GDVAIVDYEG…VKELKAKELP (94 aa)) constitute a PPIase FKBP-type domain.

This sequence belongs to the FKBP-type PPIase family. Tig subfamily.

The protein resides in the cytoplasm. The catalysed reaction is [protein]-peptidylproline (omega=180) = [protein]-peptidylproline (omega=0). Involved in protein export. Acts as a chaperone by maintaining the newly synthesized protein in an open conformation. Functions as a peptidyl-prolyl cis-trans isomerase. This chain is Trigger factor, found in Rippkaea orientalis (strain PCC 8801 / RF-1) (Cyanothece sp. (strain PCC 8801)).